The sequence spans 843 residues: Glycogen phosphorylase, brain form (843 aa).

A2 carries the post-translational modification N-acetylalanine. A Phosphoserine; by PHK; in form phosphorylase A modification is found at S15. Positions 43, 197, and 310 each coordinate AMP. The residue at position 197 (Y197) is a Phosphotyrosine. Phosphotyrosine is present on Y473. Position 569 (K569) interacts with pyridoxal 5'-phosphate. Residues 677-678 (TG) form a pyridoxal 5'-phosphate region. Position 681 is an N6-(pyridoxal phosphate)lysine (K681).

Belongs to the glycogen phosphorylase family. In terms of assembly, homodimer. Dimers associate into a tetramer to form the enzymatically active phosphorylase A. Requires pyridoxal 5'-phosphate as cofactor. Phosphorylation of Ser-15 converts phosphorylase B (unphosphorylated) to phosphorylase A.

It catalyses the reaction [(1-&gt;4)-alpha-D-glucosyl](n) + phosphate = [(1-&gt;4)-alpha-D-glucosyl](n-1) + alpha-D-glucose 1-phosphate. Its activity is regulated as follows. Activity of phosphorylase is controlled both by allosteric means (through the non-covalent binding of metabolites) and by covalent modification. Thus AMP allosterically activates, whereas ATP, ADP, and glucose-6-phosphate allosterically inhibit, phosphorylase B. In terms of biological role, glycogen phosphorylase that regulates glycogen mobilization. Phosphorylase is an important allosteric enzyme in carbohydrate metabolism. Enzymes from different sources differ in their regulatory mechanisms and in their natural substrates. However, all known phosphorylases share catalytic and structural properties. The protein is Glycogen phosphorylase, brain form (PYGB) of Bos taurus (Bovine).